The chain runs to 42 residues: AILGQDGSVWAQGLHLGGAKYVIAGEPGAVIRLGDYLLDQGL.

This sequence belongs to the profilin family. In terms of assembly, occurs in many kinds of cells as a complex with monomeric actin in a 1:1 ratio.

It localises to the cytoplasm. It is found in the cytoskeleton. Functionally, binds to actin and affects the structure of the cytoskeleton. At high concentrations, profilin prevents the polymerization of actin, whereas it enhances it at low concentrations. The chain is Profilin from Plantago lanceolata (English plantain).